Reading from the N-terminus, the 485-residue chain is Signal recognition particle protein (485 aa).

GTP contacts are provided by residues 107 to 114 (GLQGAGKT), 189 to 193 (DTAGR), and 247 to 250 (TKLD). The segment at 452 to 485 (GFGGGAPAPQPGFRGYGPPKKQKKGSKKKKGFGL) is disordered. The segment covering 471 to 485 (KKQKKGSKKKKGFGL) has biased composition (basic residues).

This sequence belongs to the GTP-binding SRP family. SRP54 subfamily. In terms of assembly, part of the signal recognition particle protein translocation system, which is composed of SRP and FtsY.

Its subcellular location is the cytoplasm. It catalyses the reaction GTP + H2O = GDP + phosphate + H(+). In terms of biological role, involved in targeting and insertion of nascent membrane proteins into the cytoplasmic membrane. Binds to the hydrophobic signal sequence of the ribosome-nascent chain (RNC) as it emerges from the ribosomes. The SRP-RNC complex is then targeted to the cytoplasmic membrane where it interacts with the SRP receptor FtsY. This chain is Signal recognition particle protein, found in Synechococcus elongatus (strain ATCC 33912 / PCC 7942 / FACHB-805) (Anacystis nidulans R2).